The primary structure comprises 382 residues: Galactokinase (382 aa).

Position 34–37 (34–37) interacts with substrate; the sequence is EHTD. An ATP-binding site is contributed by 124-130; sequence GAGLSSS. Residues S130 and E162 each coordinate Mg(2+). Residue D174 is the Proton acceptor of the active site. Residue Y223 participates in substrate binding.

The protein belongs to the GHMP kinase family. GalK subfamily.

It is found in the cytoplasm. It catalyses the reaction alpha-D-galactose + ATP = alpha-D-galactose 1-phosphate + ADP + H(+). It participates in carbohydrate metabolism; galactose metabolism. In terms of biological role, catalyzes the transfer of the gamma-phosphate of ATP to D-galactose to form alpha-D-galactose-1-phosphate (Gal-1-P). The sequence is that of Galactokinase from Escherichia coli O9:H4 (strain HS).